The primary structure comprises 139 residues: D-ribose pyranase (139 aa).

The Proton donor role is filled by His-20. Substrate-binding positions include Asp-28, His-106, and 128–130; that span reads YAN.

This sequence belongs to the RbsD / FucU family. RbsD subfamily. As to quaternary structure, homodecamer.

The protein localises to the cytoplasm. The catalysed reaction is beta-D-ribopyranose = beta-D-ribofuranose. It functions in the pathway carbohydrate metabolism; D-ribose degradation; D-ribose 5-phosphate from beta-D-ribopyranose: step 1/2. Functionally, catalyzes the interconversion of beta-pyran and beta-furan forms of D-ribose. This chain is D-ribose pyranase, found in Aliivibrio salmonicida (strain LFI1238) (Vibrio salmonicida (strain LFI1238)).